The primary structure comprises 358 residues: Tripartite motif-containing protein 54 (358 aa).

An RING-type zinc finger spans residues cysteine 26–arginine 82. The B box-type zinc-finger motif lies at glutamate 121–leucine 163. 4 residues coordinate Zn(2+): cysteine 126, histidine 129, cysteine 149, and histidine 155. The tract at residues lysine 168–glutamine 211 is mediates microtubule-binding and homooligomerization. Residues glutamine 194–glutamate 258 are a coiled coil. The 59-residue stretch at methionine 271 to glutamine 329 folds into the COS domain. Residues isoleucine 326–proline 358 form a disordered region. Over residues glycine 334–glutamate 345 the composition is skewed to acidic residues.

Homooligomer and heterooligomer. Interacts with TRIM63 and probably with TRIM55. Interacts with tubulin.

It localises to the cytoplasm. The protein resides in the cytoskeleton. The protein localises to the myofibril. It is found in the sarcomere. Its subcellular location is the z line. Functionally, may bind and stabilize microtubules during myotubes formation. The polypeptide is Tripartite motif-containing protein 54 (TRIM54) (Pongo abelii (Sumatran orangutan)).